Consider the following 194-residue polypeptide: Small ribosomal subunit protein uS4c (194 aa).

An S4 RNA-binding domain is found at 84 to 144 (MRLDTLLYRT…KEILKSLNDK (61 aa)).

It belongs to the universal ribosomal protein uS4 family. As to quaternary structure, part of the 30S ribosomal subunit. Contacts protein S5. The interaction surface between S4 and S5 is involved in control of translational fidelity.

Its subcellular location is the plastid. The protein localises to the chloroplast. Its function is as follows. One of the primary rRNA binding proteins, it binds directly to 16S rRNA where it nucleates assembly of the body of the 30S subunit. Functionally, with S5 and S12 plays an important role in translational accuracy. The polypeptide is Small ribosomal subunit protein uS4c (rps4) (Bigelowiella natans (Pedinomonas minutissima)).